The following is a 499-amino-acid chain: Glucose-6-phosphate exchanger SLC37A2 (499 aa).

Residues 21 to 40 (YRGFIIVMTFLFYTCYHLSR) traverse the membrane as a helical segment. 3 N-linked (GlcNAc...) asparagine glycosylation sites follow: Asn53, Asn62, and Asn66. 11 helical membrane-spanning segments follow: residues 86–106 (GSLD…SGIF), 116–136 (LSGG…GYYW), 143–163 (YYIL…PAVV), 187–207 (AVGN…AWGL), 208–228 (SFIV…FFLV), 302–322 (LCLL…PLYI), 334–354 (GDLS…AGGI), 362–382 (AITC…YNYF), 391–411 (IAML…ITTA), 434–454 (AIID…AGVL), and 458–478 (GWNY…LLLA).

This sequence belongs to the major facilitator superfamily. Organophosphate:Pi antiporter (OPA) (TC 2.A.1.4) family.

The protein localises to the endoplasmic reticulum membrane. The enzyme catalyses D-glucose 6-phosphate(in) + phosphate(out) = D-glucose 6-phosphate(out) + phosphate(in). Its function is as follows. Inorganic phosphate and glucose-6-phosphate antiporter. May transport cytoplasmic glucose-6-phosphate into the lumen of the endoplasmic reticulum and translocate inorganic phosphate into the opposite direction. The protein is Glucose-6-phosphate exchanger SLC37A2 of Xenopus laevis (African clawed frog).